We begin with the raw amino-acid sequence, 563 residues long: Arginine--tRNA ligase (563 aa).

The 'HIGH' region signature appears at 123–133 (PNIAKDMHVGH).

Belongs to the class-I aminoacyl-tRNA synthetase family. In terms of assembly, monomer.

Its subcellular location is the cytoplasm. The enzyme catalyses tRNA(Arg) + L-arginine + ATP = L-arginyl-tRNA(Arg) + AMP + diphosphate. The chain is Arginine--tRNA ligase from Chlamydia trachomatis serovar A (strain ATCC VR-571B / DSM 19440 / HAR-13).